Reading from the N-terminus, the 304-residue chain is Nucleotide-binding protein RHA1_ro07174 (304 aa).

24–31 (GLSGAGLQ) serves as a coordination point for ATP. Position 75-78 (75-78 (DVRS)) interacts with GTP.

Belongs to the RapZ-like family.

Displays ATPase and GTPase activities. The protein is Nucleotide-binding protein RHA1_ro07174 of Rhodococcus jostii (strain RHA1).